We begin with the raw amino-acid sequence, 434 residues long: Enolase (434 aa).

Position 163 (glutamine 163) interacts with (2R)-2-phosphoglycerate. Glutamate 205 functions as the Proton donor in the catalytic mechanism. 3 residues coordinate Mg(2+): aspartate 242, glutamate 291, and aspartate 318. (2R)-2-phosphoglycerate is bound by residues lysine 343, arginine 372, serine 373, and lysine 394. Lysine 343 serves as the catalytic Proton acceptor.

Belongs to the enolase family. Requires Mg(2+) as cofactor.

Its subcellular location is the cytoplasm. The protein resides in the secreted. It localises to the cell surface. The catalysed reaction is (2R)-2-phosphoglycerate = phosphoenolpyruvate + H2O. The protein operates within carbohydrate degradation; glycolysis; pyruvate from D-glyceraldehyde 3-phosphate: step 4/5. Its function is as follows. Catalyzes the reversible conversion of 2-phosphoglycerate (2-PG) into phosphoenolpyruvate (PEP). It is essential for the degradation of carbohydrates via glycolysis. This is Enolase from Streptococcus thermophilus (strain ATCC BAA-491 / LMD-9).